Consider the following 304-residue polypeptide: Acetyl-coenzyme A carboxylase carboxyl transferase subunit beta (304 aa).

In terms of domain architecture, CoA carboxyltransferase N-terminal spans Val23–Glu292. Positions 27, 30, 46, and 49 each coordinate Zn(2+). Residues Cys27–Cys49 form a C4-type zinc finger. Residues Pro281–Ala304 form a disordered region. The segment covering Pro295–Ala304 has biased composition (pro residues).

The protein belongs to the AccD/PCCB family. Acetyl-CoA carboxylase is a heterohexamer composed of biotin carboxyl carrier protein (AccB), biotin carboxylase (AccC) and two subunits each of ACCase subunit alpha (AccA) and ACCase subunit beta (AccD). The cofactor is Zn(2+).

Its subcellular location is the cytoplasm. It carries out the reaction N(6)-carboxybiotinyl-L-lysyl-[protein] + acetyl-CoA = N(6)-biotinyl-L-lysyl-[protein] + malonyl-CoA. The protein operates within lipid metabolism; malonyl-CoA biosynthesis; malonyl-CoA from acetyl-CoA: step 1/1. Functionally, component of the acetyl coenzyme A carboxylase (ACC) complex. Biotin carboxylase (BC) catalyzes the carboxylation of biotin on its carrier protein (BCCP) and then the CO(2) group is transferred by the transcarboxylase to acetyl-CoA to form malonyl-CoA. In Citrobacter koseri (strain ATCC BAA-895 / CDC 4225-83 / SGSC4696), this protein is Acetyl-coenzyme A carboxylase carboxyl transferase subunit beta.